A 252-amino-acid polypeptide reads, in one-letter code: uncharacterized protein (252 aa).

16 to 40 (LVTGASDGIGREAAMTYARYGATVI) is an NADP(+) binding site. Serine 152 is a substrate binding site. Residue tyrosine 165 is the Proton acceptor of the active site.

It belongs to the short-chain dehydrogenases/reductases (SDR) family.

This is an uncharacterized protein from Escherichia coli (strain K12).